The chain runs to 2185 residues: Genome polyprotein (2185 aa).

Residue Gly-2 is the site of N-myristoyl glycine; by host attachment. Residues Gly-2–Gln-1495 are Cytoplasmic-facing. Positions Phe-566 to Val-582 are amphipathic alpha-helix. Catalysis depends on for protease 2A activity residues His-872 and Asp-890. Zn(2+) contacts are provided by Cys-907 and Cys-909. Cys-961 functions as the For protease 2A activity in the catalytic mechanism. Zn(2+) is bound by residues Cys-967 and His-969. The membrane-binding stretch occupies residues Asn-1101 to Gln-1173. Residues Asn-1101–Thr-1239 form an oligomerization region. The segment at Ala-1122–Gln-1126 is RNA-binding. The SF3 helicase domain occupies Glu-1205–Asn-1361. The Zn(2+) site is built by Cys-1369, Cys-1381, and Cys-1386. The C4-type; degenerate zinc-finger motif lies at Cys-1369 to Cys-1386. The interval Glu-1413 to Val-1420 is RNA-binding. An oligomerization region spans residues Leu-1424–Gln-1429. The stretch at Ala-1496 to Tyr-1511 is an intramembrane region. The Cytoplasmic portion of the chain corresponds to Lys-1512–Phe-2185. O-(5'-phospho-RNA)-tyrosine is present on Tyr-1521. In terms of domain architecture, Peptidase C3 spans Gly-1541–Phe-1719. Catalysis depends on for protease 3C activity residues His-1580, Glu-1611, and Cys-1687. The region spanning Gly-1950–Leu-2066 is the RdRp catalytic domain. The Mg(2+) site is built by Asp-1956 and Asp-2052.

The protein belongs to the picornaviruses polyprotein family. In terms of assembly, interacts with capsid protein VP1 and capsid protein VP3 to form heterotrimeric protomers. Interacts with capsid protein VP0, and capsid protein VP3 to form heterotrimeric protomers. Five protomers subsequently associate to form pentamers which serve as building blocks for the capsid. Interacts with capsid protein VP2, capsid protein VP3 and capsid protein VP4 following cleavage of capsid protein VP0. As to quaternary structure, interacts with capsid protein VP1 and capsid protein VP3 in the mature capsid. In terms of assembly, interacts with capsid protein VP0 and capsid protein VP1 to form heterotrimeric protomers. Five protomers subsequently associate to form pentamers which serve as building blocks for the capsid. Interacts with capsid protein VP4 in the mature capsid. Interacts with protein 2C; this interaction may be important for virion morphogenesis. Interacts with capsid protein VP1 and capsid protein VP3. As to quaternary structure, homodimer. In terms of assembly, homohexamer; forms a hexameric ring structure with 6-fold symmetry characteristic of AAA+ ATPases. Interacts (via N-terminus) with host RTN3 (via reticulon domain); this interaction is important for viral replication. Interacts with capsid protein VP3; this interaction may be important for virion morphogenesis. Interacts with protein 3CD. As to quaternary structure, homodimer. Interacts with host GBF1. Interacts (via GOLD domain) with host ACBD3 (via GOLD domain); this interaction allows the formation of a viral protein 3A/ACBD3 heterotetramer with a 2:2 stoichiometry, which will stimulate the recruitment of host PI4KB in order to synthesize PI4P at the viral RNA replication sites. In terms of assembly, interacts with RNA-directed RNA polymerase. Interacts with protein 3AB and with RNA-directed RNA polymerase. As to quaternary structure, interacts with Viral protein genome-linked and with protein 3CD. Requires Mg(2+) as cofactor. Post-translationally, specific enzymatic cleavages in vivo by the viral proteases yield processing intermediates and the mature proteins. Myristoylation is required for the formation of pentamers during virus assembly. Further assembly of 12 pentamers and a molecule of genomic RNA generates the provirion. In terms of processing, during virion maturation, immature virions are rendered infectious following cleavage of VP0 into VP4 and VP2. This maturation seems to be an autocatalytic event triggered by the presence of RNA in the capsid and it is followed by a conformational change infectious virion. Post-translationally, myristoylation is required during RNA encapsidation and formation of the mature virus particle. VPg is uridylylated by the polymerase into VPg-pUpU. This acts as a nucleotide-peptide primer for the genomic RNA replication.

Its subcellular location is the virion. The protein localises to the host cytoplasm. It is found in the host cytoplasmic vesicle membrane. The protein resides in the host nucleus. The catalysed reaction is a ribonucleoside 5'-triphosphate + H2O = a ribonucleoside 5'-diphosphate + phosphate + H(+). It carries out the reaction Selective cleavage of Tyr-|-Gly bond in the picornavirus polyprotein.. The enzyme catalyses RNA(n) + a ribonucleoside 5'-triphosphate = RNA(n+1) + diphosphate. It catalyses the reaction Selective cleavage of Gln-|-Gly bond in the poliovirus polyprotein. In other picornavirus reactions Glu may be substituted for Gln, and Ser or Thr for Gly.. With respect to regulation, replication or transcription is subject to high level of random mutations by the nucleotide analog ribavirin. Functionally, forms an icosahedral capsid of pseudo T=3 symmetry with capsid proteins VP2 and VP3. The capsid is 300 Angstroms in diameter, composed of 60 copies of each capsid protein and enclosing the viral positive strand RNA genome. Capsid protein VP1 mainly forms the vertices of the capsid. Capsid protein VP1 interacts with host cell receptor to provide virion attachment to target host cells. This attachment induces virion internalization. Tyrosine kinases are probably involved in the entry process. After binding to its receptor, the capsid undergoes conformational changes. Capsid protein VP1 N-terminus (that contains an amphipathic alpha-helix) and capsid protein VP4 are externalized. Together, they shape a pore in the host membrane through which viral genome is translocated to host cell cytoplasm. In terms of biological role, forms an icosahedral capsid of pseudo T=3 symmetry with capsid proteins VP2 and VP3. The capsid is 300 Angstroms in diameter, composed of 60 copies of each capsid protein and enclosing the viral positive strand RNA genome. Lies on the inner surface of the capsid shell. After binding to the host receptor, the capsid undergoes conformational changes. Capsid protein VP4 is released, Capsid protein VP1 N-terminus is externalized, and together, they shape a pore in the host membrane through which the viral genome is translocated into the host cell cytoplasm. Its function is as follows. Component of immature procapsids, which is cleaved into capsid proteins VP4 and VP2 after maturation. Allows the capsid to remain inactive before the maturation step. Functionally, cysteine protease that cleaves viral polyprotein and specific host proteins. It is responsible for the autocatalytic cleavage between the P1 and P2 regions, which is the first cleavage occurring in the polyprotein. Also cleaves the host translation initiation factor EIF4G1, in order to shut down the capped cellular mRNA translation. Inhibits the host nucleus-cytoplasm protein and RNA trafficking by cleaving host members of the nuclear pores. Counteracts stress granule formation probably by antagonizing its assembly or promoting its dissassembly. Cleaves and inhibits host IFIH1/MDA5, thereby inhibiting the type-I IFN production and the establishment of the antiviral state. Cleaves and inhibits host MAVS, thereby inhibiting the type-I IFN production and the establishment of the antiviral state. In terms of biological role, plays an essential role in the virus replication cycle by acting as a viroporin. Creates a pore in the host endoplasmic reticulum and as a consequence releases Ca2+ in the cytoplasm of infected cell. In turn, high levels of cytoplasmic calcium may trigger membrane trafficking and transport of viral ER-associated proteins to viroplasms, sites of viral genome replication. Induces and associates with structural rearrangements of intracellular membranes. Displays RNA-binding, nucleotide binding and NTPase activities. May play a role in virion morphogenesis and viral RNA encapsidation by interacting with the capsid protein VP3. Its function is as follows. Localizes the viral replication complex to the surface of membranous vesicles. Together with protein 3CD binds the Cis-Active RNA Element (CRE) which is involved in RNA synthesis initiation. Acts as a cofactor to stimulate the activity of 3D polymerase, maybe through a nucleid acid chaperone activity. Functionally, localizes the viral replication complex to the surface of membranous vesicles. It inhibits host cell endoplasmic reticulum-to-Golgi apparatus transport and causes the disassembly of the Golgi complex, possibly through GBF1 interaction. This would result in depletion of MHC, trail receptors and IFN receptors at the host cell surface. Plays an essential role in viral RNA replication by recruiting ACBD3 and PI4KB at the viral replication sites, thereby allowing the formation of the rearranged membranous structures where viral replication takes place. In terms of biological role, acts as a primer for viral RNA replication and remains covalently bound to viral genomic RNA. VPg is uridylylated prior to priming replication into VPg-pUpU. The oriI viral genomic sequence may act as a template for this. The VPg-pUpU is then used as primer on the genomic RNA poly(A) by the RNA-dependent RNA polymerase to replicate the viral genome. During genome replication, the VPg-RNA linkage is removed by the host TDP2, thereby accelerating replication. During the late stage of the replication cycle, host TDP2 is excluded from sites of viral RNA synthesis and encapsidation, allowing for the generation of progeny virions. Involved in the viral replication complex and viral polypeptide maturation. It exhibits protease activity with a specificity and catalytic efficiency that is different from protease 3C. Protein 3CD lacks polymerase activity. Protein 3CD binds to the 5'UTR of the viral genome. Its function is as follows. Replicates the viral genomic RNA on the surface of intracellular membranes. May form linear arrays of subunits that propagate along a strong head-to-tail interaction called interface-I. Covalently attaches UMP to a tyrosine of VPg, which is used to prime RNA synthesis. The positive stranded RNA genome is first replicated at virus induced membranous vesicles, creating a dsRNA genomic replication form. This dsRNA is then used as template to synthesize positive stranded RNA genomes. ss(+)RNA genomes are either translated, replicated or encapsidated. Functionally, major viral protease that mediates proteolytic processing of the polyprotein. Cleaves host EIF5B, contributing to host translation shutoff. Also cleaves host PABPC1, contributing to host translation shutoff. Cleaves host NLRP1, triggers host N-glycine-mediated degradation of the autoinhibitory NLRP1 N-terminal fragment. The protein is Genome polyprotein of Homo sapiens (Human).